A 433-amino-acid chain; its full sequence is ACT domain-containing protein ACR6 (433 aa).

4 ACT domains span residues 30-110, 120-207, 250-326, and 328-402; these read VIQV…RSSV, SIEL…SCSD, VVTM…ASEG, and ELEL…VKKK.

Functionally, may bind amino acids. This Arabidopsis thaliana (Mouse-ear cress) protein is ACT domain-containing protein ACR6.